A 545-amino-acid polypeptide reads, in one-letter code: Toxin BC_0920 (545 aa).

Residues Met1–Glu217 form the LXG domain.

This sequence in the N-terminal section; belongs to the LXG family. The protein in the C-terminal section; belongs to the bacterial EndoU family. In terms of assembly, probably interacts with cognate immunity protein BC_0921. The interaction inhibits the toxic activity of BC_0921.

It localises to the secreted. In terms of biological role, toxic component of an LXG toxin-immunity module. The C-terminus (residues 322-545) has RNase activity in E.coli which is neutralized by cognate immunity protein BC_0921, but not by immunity proteins specific to other toxins with the LXG domain. Degrades 5S rRNA and several tRNAs in vitro; cleavage is endonucleolytic within the anticodon loop for tRNA(GAU-Ile) and tRNA(UUC-Glu) but total for 5S rRNA and at least one other tRNA. RNase activity is suppressed by cognate immunity protein BC_0921. This Bacillus cereus (strain ATCC 14579 / DSM 31 / CCUG 7414 / JCM 2152 / NBRC 15305 / NCIMB 9373 / NCTC 2599 / NRRL B-3711) protein is Toxin BC_0920.